Consider the following 266-residue polypeptide: 4-hydroxy-tetrahydrodipicolinate reductase (266 aa).

10-15 (GPRGRM) serves as a coordination point for NAD(+). Residue Lys-38 coordinates NADP(+). NAD(+) contacts are provided by residues 99 to 101 (GTT) and 125 to 128 (APNF). The active-site Proton donor/acceptor is His-155. His-156 contributes to the (S)-2,3,4,5-tetrahydrodipicolinate binding site. Lys-159 serves as the catalytic Proton donor. A (S)-2,3,4,5-tetrahydrodipicolinate-binding site is contributed by 165-166 (GT).

This sequence belongs to the DapB family.

Its subcellular location is the cytoplasm. It catalyses the reaction (S)-2,3,4,5-tetrahydrodipicolinate + NAD(+) + H2O = (2S,4S)-4-hydroxy-2,3,4,5-tetrahydrodipicolinate + NADH + H(+). It carries out the reaction (S)-2,3,4,5-tetrahydrodipicolinate + NADP(+) + H2O = (2S,4S)-4-hydroxy-2,3,4,5-tetrahydrodipicolinate + NADPH + H(+). The protein operates within amino-acid biosynthesis; L-lysine biosynthesis via DAP pathway; (S)-tetrahydrodipicolinate from L-aspartate: step 4/4. In terms of biological role, catalyzes the conversion of 4-hydroxy-tetrahydrodipicolinate (HTPA) to tetrahydrodipicolinate. The protein is 4-hydroxy-tetrahydrodipicolinate reductase of Bacillus cereus (strain ATCC 10987 / NRS 248).